A 203-amino-acid chain; its full sequence is dCTP deaminase (203 aa).

DCTP is bound by residues 105 to 110 (RSSLGR), aspartate 123, 131 to 133 (TLE), glutamine 152, tyrosine 166, lysine 173, and glutamine 177. Glutamate 133 serves as the catalytic Proton donor/acceptor. Positions 164-203 (RPYGVERGSKYQDQDGPQASRIGSDPEFHSDENQAAEHES) are disordered. The span at 166 to 176 (YGVERGSKYQD) shows a compositional bias: basic and acidic residues. The span at 187–203 (SDPEFHSDENQAAEHES) shows a compositional bias: basic and acidic residues.

This sequence belongs to the dCTP deaminase family. As to quaternary structure, homotrimer.

The catalysed reaction is dCTP + H2O + H(+) = dUTP + NH4(+). The protein operates within pyrimidine metabolism; dUMP biosynthesis; dUMP from dCTP (dUTP route): step 1/2. Functionally, catalyzes the deamination of dCTP to dUTP. In Halorubrum lacusprofundi (strain ATCC 49239 / DSM 5036 / JCM 8891 / ACAM 34), this protein is dCTP deaminase.